A 154-amino-acid polypeptide reads, in one-letter code: Deoxyuridine 5'-triphosphate nucleotidohydrolase (154 aa).

Substrate is bound by residues 68-70 (RSG), Asn-81, and 85-87 (TID).

This sequence belongs to the dUTPase family. It depends on Mg(2+) as a cofactor.

It carries out the reaction dUTP + H2O = dUMP + diphosphate + H(+). The protein operates within pyrimidine metabolism; dUMP biosynthesis; dUMP from dCTP (dUTP route): step 2/2. In terms of biological role, this enzyme is involved in nucleotide metabolism: it produces dUMP, the immediate precursor of thymidine nucleotides and it decreases the intracellular concentration of dUTP so that uracil cannot be incorporated into DNA. The chain is Deoxyuridine 5'-triphosphate nucleotidohydrolase from Acidiphilium cryptum (strain JF-5).